A 495-amino-acid chain; its full sequence is Lysine--tRNA ligase (495 aa).

Mg(2+)-binding residues include glutamate 406 and glutamate 413.

It belongs to the class-II aminoacyl-tRNA synthetase family. As to quaternary structure, homodimer. Mg(2+) is required as a cofactor.

It is found in the cytoplasm. The catalysed reaction is tRNA(Lys) + L-lysine + ATP = L-lysyl-tRNA(Lys) + AMP + diphosphate. The sequence is that of Lysine--tRNA ligase from Staphylococcus saprophyticus subsp. saprophyticus (strain ATCC 15305 / DSM 20229 / NCIMB 8711 / NCTC 7292 / S-41).